The chain runs to 142 residues: General odorant-binding protein 99a (142 aa).

Positions 1–16 (MKVFVAICVLIGLASA) are cleaved as a signal peptide. 3 disulfide bridges follow: Cys33–Cys64, Cys60–Cys116, and Cys105–Cys125.

The protein belongs to the PBP/GOBP family. In terms of tissue distribution, expressed in larval chemosensory organ. Specifically expressed exclusively in a subset of chemosensory sensilla on the third antennal segment.

The protein localises to the secreted. Present in the aqueous fluid surrounding olfactory sensory dendrites and are thought to aid in the capture and transport of hydrophobic odorants into and through this fluid. In Drosophila melanogaster (Fruit fly), this protein is General odorant-binding protein 99a (Obp99a).